We begin with the raw amino-acid sequence, 174 residues long: Protein RESISTANCE TO POWDERY MILDEW 8.2 (174 aa).

An RPW8 domain is found at 1–153 (MIAEVAAGGA…IMPQPKFEIH (153 aa)). Residues 7–23 (AGGALGLALSVLHEAVK) form a helical membrane-spanning segment. The stretch at 68 to 145 (VNKRLKLLLE…EISTKLDKIM (78 aa)) forms a coiled coil.

The protein belongs to the plant RPW8 protein family.

The protein resides in the membrane. In terms of biological role, disease resistance (R) protein that induces localized, salicylic acid-dependent defenses. Confers resistance to powdery mildew (e.g. Erysiphe cichoracearum UCSC1). In Arabidopsis thaliana (Mouse-ear cress), this protein is Protein RESISTANCE TO POWDERY MILDEW 8.2.